The following is a 314-amino-acid chain: Olfactory receptor 8D4 (314 aa).

Residues 1-25 (MGVKNHSTVTEFLLSGLTEQAELQL) lie on the Extracellular side of the membrane. Asparagine 5 carries N-linked (GlcNAc...) asparagine glycosylation. A helical transmembrane segment spans residues 26-46 (PLFCLFLGIYTVTVVGNLSMI). The Cytoplasmic segment spans residues 47–54 (SIIRLNRQ). A helical transmembrane segment spans residues 55–75 (LHTPMYYFLSSLSFLDFCYSS). Residues 76–99 (VITPKMLSGFLCRDRSISYSGCMI) are Extracellular-facing. A disulfide bridge links cysteine 97 with cysteine 189. A helical membrane pass occupies residues 100-120 (QLFFFCVCVISECYMLAAMAC). Residues 121–139 (DRYVAICSPLLYRVIMSPR) lie on the Cytoplasmic side of the membrane. A helical transmembrane segment spans residues 140–160 (VCSLLVAAVFSVGFTDAVIHG). Topologically, residues 161-197 (GCILRLSFCGSNIIKHYFCDIVPLIKLSCSSTYIDEL) are extracellular. The helical transmembrane segment at 198–217 (LIFVIGGFNMVATSLTIIIS) threads the bilayer. At 218 to 237 (YAFILTSILRIHSKKGRCKA) the chain is on the cytoplasmic side. A helical membrane pass occupies residues 238-258 (FSTCSSHLTAVLMFYGSLMSM). Over 259-271 (YLKPASSSSLTQE) the chain is Extracellular. A helical membrane pass occupies residues 272–292 (KVSSVFYTTVILMLNPLIYSL). The Cytoplasmic portion of the chain corresponds to 293 to 314 (RNNEVRNALMKLLRRKISLSPG).

Belongs to the G-protein coupled receptor 1 family.

The protein localises to the cell membrane. Odorant receptor. The chain is Olfactory receptor 8D4 (OR8D4) from Homo sapiens (Human).